The primary structure comprises 166 residues: Endoribonuclease YbeY (166 aa).

Residues His129, His133, and His139 each coordinate Zn(2+).

It belongs to the endoribonuclease YbeY family. Zn(2+) is required as a cofactor.

The protein localises to the cytoplasm. Single strand-specific metallo-endoribonuclease involved in late-stage 70S ribosome quality control and in maturation of the 3' terminus of the 16S rRNA. The polypeptide is Endoribonuclease YbeY (Mesorhizobium japonicum (strain LMG 29417 / CECT 9101 / MAFF 303099) (Mesorhizobium loti (strain MAFF 303099))).